The primary structure comprises 78 residues: Apolipoprotein C-I (78 aa).

An N-terminal signal peptide occupies residues 1-26; that stretch reads MRLILWLPVLVVVLLMVLEGPAPAQG.

The protein belongs to the apolipoprotein C1 family.

Its subcellular location is the secreted. In terms of biological role, inhibitor of lipoprotein binding to the low density lipoprotein (LDL) receptor, LDL receptor-related protein, and very low density lipoprotein (VLDL) receptor. Associates with high density lipoproteins (HDL) and the triacylglycerol-rich lipoproteins in the plasma and makes up about 10% of the protein of the VLDL and 2% of that of HDL. Appears to interfere directly with fatty acid uptake and is also the major plasma inhibitor of cholesteryl ester transfer protein (CETP). Binds free fatty acids and reduces their intracellular esterification. Modulates the interaction of APOE with beta-migrating VLDL and inhibits binding of beta-VLDL to the LDL receptor-related protein. This is Apolipoprotein C-I (APOC1) from Puma concolor (Mountain lion).